A 552-amino-acid polypeptide reads, in one-letter code: Thermosome subunit beta (552 aa).

Residues Ala531–Asp552 are disordered. A compositionally biased stretch (basic and acidic residues) spans Gly540 to Asp552.

Belongs to the TCP-1 chaperonin family. Forms a heterooligomeric complex of two stacked nine-membered rings; one of alpha and the other of beta subunits. Sometimes called a 'rosettasome'.

The protein resides in the cytoplasm. It carries out the reaction ATP + H2O = ADP + phosphate + H(+). In terms of biological role, molecular chaperone; binds unfolded polypeptides in vitro, stimulates protein folding and has ATPase activity. One of the most abundant proteins in the cell at all temperatures. The polypeptide is Thermosome subunit beta (thsB) (Saccharolobus shibatae (strain ATCC 51178 / DSM 5389 / JCM 8931 / NBRC 15437 / B12) (Sulfolobus shibatae)).